The following is a 349-amino-acid chain: Holliday junction branch migration complex subunit RuvB (349 aa).

The span at methionine 1–glutamate 15 shows a compositional bias: basic and acidic residues. The interval methionine 1–glutamate 25 is disordered. Residues methionine 1–tyrosine 183 form a large ATPase domain (RuvB-L) region. ATP contacts are provided by residues leucine 22, arginine 23, glycine 64, lysine 67, threonine 68, threonine 69, glutamate 130–phenylalanine 132, arginine 173, tyrosine 183, and arginine 220. Threonine 68 is a Mg(2+) binding site. The tract at residues threonine 184–glutamate 254 is small ATPAse domain (RuvB-S). A head domain (RuvB-H) region spans residues glutamate 257–proline 349. DNA contacts are provided by arginine 293, arginine 312, and arginine 317.

The protein belongs to the RuvB family. As to quaternary structure, homohexamer. Forms an RuvA(8)-RuvB(12)-Holliday junction (HJ) complex. HJ DNA is sandwiched between 2 RuvA tetramers; dsDNA enters through RuvA and exits via RuvB. An RuvB hexamer assembles on each DNA strand where it exits the tetramer. Each RuvB hexamer is contacted by two RuvA subunits (via domain III) on 2 adjacent RuvB subunits; this complex drives branch migration. In the full resolvosome a probable DNA-RuvA(4)-RuvB(12)-RuvC(2) complex forms which resolves the HJ.

The protein localises to the cytoplasm. The enzyme catalyses ATP + H2O = ADP + phosphate + H(+). Its function is as follows. The RuvA-RuvB-RuvC complex processes Holliday junction (HJ) DNA during genetic recombination and DNA repair, while the RuvA-RuvB complex plays an important role in the rescue of blocked DNA replication forks via replication fork reversal (RFR). RuvA specifically binds to HJ cruciform DNA, conferring on it an open structure. The RuvB hexamer acts as an ATP-dependent pump, pulling dsDNA into and through the RuvAB complex. RuvB forms 2 homohexamers on either side of HJ DNA bound by 1 or 2 RuvA tetramers; 4 subunits per hexamer contact DNA at a time. Coordinated motions by a converter formed by DNA-disengaged RuvB subunits stimulates ATP hydrolysis and nucleotide exchange. Immobilization of the converter enables RuvB to convert the ATP-contained energy into a lever motion, pulling 2 nucleotides of DNA out of the RuvA tetramer per ATP hydrolyzed, thus driving DNA branch migration. The RuvB motors rotate together with the DNA substrate, which together with the progressing nucleotide cycle form the mechanistic basis for DNA recombination by continuous HJ branch migration. Branch migration allows RuvC to scan DNA until it finds its consensus sequence, where it cleaves and resolves cruciform DNA. The polypeptide is Holliday junction branch migration complex subunit RuvB (Gluconobacter oxydans (strain 621H) (Gluconobacter suboxydans)).